We begin with the raw amino-acid sequence, 208 residues long: Orotidine 5'-phosphate decarboxylase (208 aa).

Residues aspartate 7, lysine 29, 57–66 (DLKLADIPNT), serine 109, 162–172 (PGIGAQGGKAK), glycine 185, and arginine 186 contribute to the substrate site. Lysine 59 serves as the catalytic Proton donor.

Belongs to the OMP decarboxylase family. Type 1 subfamily. As to quaternary structure, homodimer.

The enzyme catalyses orotidine 5'-phosphate + H(+) = UMP + CO2. It participates in pyrimidine metabolism; UMP biosynthesis via de novo pathway; UMP from orotate: step 2/2. In terms of biological role, catalyzes the decarboxylation of orotidine 5'-monophosphate (OMP) to uridine 5'-monophosphate (UMP). The polypeptide is Orotidine 5'-phosphate decarboxylase (Pyrococcus abyssi (strain GE5 / Orsay)).